The following is a 397-amino-acid chain: Tyrosine--tRNA ligase (397 aa).

The 'HIGH' region signature appears at 39–48 (PTAPDLHLGH). The 'KMSKS' region motif lies at 223 to 227 (KMSKS). Position 226 (lysine 226) interacts with ATP. The region spanning 334 to 395 (YPIANLVHDL…GKRKFAKIRL (62 aa)) is the S4 RNA-binding domain.

The protein belongs to the class-I aminoacyl-tRNA synthetase family. TyrS type 2 subfamily. Homodimer.

The protein resides in the cytoplasm. It carries out the reaction tRNA(Tyr) + L-tyrosine + ATP = L-tyrosyl-tRNA(Tyr) + AMP + diphosphate + H(+). Catalyzes the attachment of tyrosine to tRNA(Tyr) in a two-step reaction: tyrosine is first activated by ATP to form Tyr-AMP and then transferred to the acceptor end of tRNA(Tyr). In Methylococcus capsulatus (strain ATCC 33009 / NCIMB 11132 / Bath), this protein is Tyrosine--tRNA ligase.